The chain runs to 79 residues: UPF0154 protein SAK_1616 (79 aa).

Residues 5–25 (IWILLIIVALFGGLVGGIFIA) traverse the membrane as a helical segment.

It belongs to the UPF0154 family.

The protein resides in the cell membrane. The protein is UPF0154 protein SAK_1616 of Streptococcus agalactiae serotype Ia (strain ATCC 27591 / A909 / CDC SS700).